A 489-amino-acid polypeptide reads, in one-letter code: Cobyric acid synthase (489 aa).

Residues 252-441 (ALTIGVIQLP…IHGIFANTEF (190 aa)) enclose the GATase cobBQ-type domain. The Nucleophile role is filled by Cys330. His433 is a catalytic residue.

It belongs to the CobB/CobQ family. CobQ subfamily.

The protein operates within cofactor biosynthesis; adenosylcobalamin biosynthesis. Catalyzes amidations at positions B, D, E, and G on adenosylcobyrinic A,C-diamide. NH(2) groups are provided by glutamine, and one molecule of ATP is hydrogenolyzed for each amidation. The protein is Cobyric acid synthase of Herpetosiphon aurantiacus (strain ATCC 23779 / DSM 785 / 114-95).